Reading from the N-terminus, the 121-residue chain is MSEHRQALGRYGEELAVKHIRQAGLTVLECNYRCPLGEMDIIAQEGETIIFIEVRTRSTGSRGWGEESITAKKRERLYRIATHYLKFRNYKEWPSLRFDLIAIRCQNQEGKQPDIIWIRGI.

Belongs to the UPF0102 family.

The polypeptide is UPF0102 protein Dhaf_3740 (Desulfitobacterium hafniense (strain DSM 10664 / DCB-2)).